We begin with the raw amino-acid sequence, 958 residues long: DNA repair and recombination protein RDH54 (958 aa).

A disordered region spans residues 189–217 (EALSQNMGNPSPPTTSTTETVPSTKNDGG). A compositionally biased stretch (low complexity) spans 202 to 212 (TTSTTETVPST). Residues 333–521 (LENDSDISGC…FTIIDFINPG (189 aa)) enclose the Helicase ATP-binding domain. 380–387 (IPLTGLCK) contacts ATP. The short motif at 506–509 (NDLN) is the DEGH box element. A Glycyl lysine isopeptide (Lys-Gly) (interchain with G-Cter in ubiquitin) cross-link involves residue Lys649. One can recognise a Helicase C-terminal domain in the interval 665–824 (KLKVLMTLLE…DSEMRNKESS (160 aa)).

Belongs to the SNF2/RAD54 helicase family. In terms of assembly, interacts with RAD51 and DMC1.

The protein localises to the nucleus. The enzyme catalyses ATP + H2O = ADP + phosphate + H(+). Functionally, involved in the recombinational repair of double-strand breaks (DSB) in DNA during mitosis and meiosis. Has DNA dependent ATPase activity. Promotes D-loop (displacement loop) formation with RAD51 recombinase. Modifies the topology of double-stranded DNA during the D-loop reaction to facilitate the invasion of the homologous duplex molecule by the initiating single-stranded DNA substrate. Required for adaptation from G2/M checkpoint arrest induced by a double strand break, by participating in monitoring the extent of single-stranded DNA produced by resection of DNA ends. This role is distinct from its roles in recombination. Promotes colocalization of RAD51 and DMC1 during meiotic recombination. Involved in crossover interference. This Saccharomyces cerevisiae (strain ATCC 204508 / S288c) (Baker's yeast) protein is DNA repair and recombination protein RDH54 (RDH54).